The following is a 418-amino-acid chain: (+)-T-muurolol synthase ((2E,6E)-farnesyl diphosphate cyclizing) (418 aa).

Mg(2+) contacts are provided by Asp-83 and Asp-88. The short motif at 83–88 is the DDXXXD motif element; that stretch reads DDEYCD. Arg-179 provides a ligand contact to substrate. Mg(2+) is bound by residues Asn-225 and Ser-229. Lys-232 contacts substrate. Glu-233 contacts Mg(2+). 312 to 313 serves as a coordination point for substrate; it reads RY. A disordered region spans residues 354-418; sequence LPEPGSDGAD…QQSTWRREHR (65 aa). A compositionally biased stretch (polar residues) spans 402–412; that stretch reads ASRSSGLQQST.

It belongs to the terpene synthase family. Mg(2+) is required as a cofactor.

It carries out the reaction (2E,6E)-farnesyl diphosphate + H2O = (+)-T-muurolol + diphosphate. It participates in secondary metabolite biosynthesis; terpenoid biosynthesis. Catalyzes the conversion of (2E,6E)-farnesyl diphosphate (FPP) into (+)-T-muurolol via a 1,10-cyclization, which requires isomerization of FPP to nerolidyl diphosphate (NPP) and then abstraction of the pyrophosphate from intermediate NPP leading to a (E,Z)-germacradienyl (helminthogermacradienyl) cation. In Streptomyces clavuligerus, this protein is (+)-T-muurolol synthase ((2E,6E)-farnesyl diphosphate cyclizing).